Consider the following 237-residue polypeptide: Ribonuclease 3 (237 aa).

One can recognise an RNase III domain in the interval Ser-3–Gly-133. Position 43 (Glu-43) interacts with Mg(2+). Asp-47 is an active-site residue. Mg(2+) contacts are provided by Asp-119 and Glu-122. The active site involves Glu-122. Positions Asp-160 to Val-228 constitute a DRBM domain.

It belongs to the ribonuclease III family. In terms of assembly, homodimer. Mg(2+) is required as a cofactor.

It is found in the cytoplasm. The catalysed reaction is Endonucleolytic cleavage to 5'-phosphomonoester.. Functionally, digests double-stranded RNA. Involved in the processing of primary rRNA transcript to yield the immediate precursors to the large and small rRNAs (23S and 16S). Processes some mRNAs, and tRNAs when they are encoded in the rRNA operon. Processes pre-crRNA and tracrRNA of type II CRISPR loci if present in the organism. This is Ribonuclease 3 from Mycolicibacterium paratuberculosis (strain ATCC BAA-968 / K-10) (Mycobacterium paratuberculosis).